The following is a 183-amino-acid chain: U3 small nucleolar ribonucleoprotein protein imp3 (183 aa).

The S4 RNA-binding domain maps to 108–174; the sequence is RRLPVVMRNI…IKKHVMDYNN (67 aa).

Belongs to the universal ribosomal protein uS4 family. Component of a heterotrimeric complex containing imp3, imp4 and mpp10.

The protein localises to the nucleus. It is found in the nucleolus. Its function is as follows. Component of the U3 small nucleolar ribonucleoprotein. Required for the early cleavages at sites A0, A1 and A2 during 18S ribosomal pre-RNA processing. This Caenorhabditis elegans protein is U3 small nucleolar ribonucleoprotein protein imp3.